The chain runs to 319 residues: ATP-dependent 6-phosphofructokinase (319 aa).

G11 lines the ATP pocket. 21–25 (RAVVR) contributes to the ADP binding site. Residues 72–73 (RC) and 102–105 (GDGS) contribute to the ATP site. Position 103 (D103) interacts with Mg(2+). 125–127 (TID) is a binding site for substrate. Residue D127 is the Proton acceptor of the active site. R154 is an ADP binding site. Residues R162 and 169-171 (MGR) contribute to the substrate site. Residues 185–187 (GAE), K211, and 213–215 (KMH) contribute to the ADP site. Residues E222, R243, and 249–252 (HIQR) contribute to the substrate site.

This sequence belongs to the phosphofructokinase type A (PFKA) family. ATP-dependent PFK group I subfamily. Prokaryotic clade 'B1' sub-subfamily. In terms of assembly, homotetramer. The cofactor is Mg(2+).

The protein resides in the cytoplasm. The enzyme catalyses beta-D-fructose 6-phosphate + ATP = beta-D-fructose 1,6-bisphosphate + ADP + H(+). It participates in carbohydrate degradation; glycolysis; D-glyceraldehyde 3-phosphate and glycerone phosphate from D-glucose: step 3/4. Allosterically activated by ADP and other diphosphonucleosides, and allosterically inhibited by phosphoenolpyruvate. Functionally, catalyzes the phosphorylation of D-fructose 6-phosphate to fructose 1,6-bisphosphate by ATP, the first committing step of glycolysis. This chain is ATP-dependent 6-phosphofructokinase, found in Clostridium botulinum (strain 657 / Type Ba4).